Consider the following 53-residue polypeptide: UPF0391 membrane protein SG0393 (53 aa).

2 consecutive transmembrane segments (helical) span residues 4–24 and 27–47; these read WGII…GGLA and AAWA…ISLF.

Belongs to the UPF0391 family.

It localises to the cell membrane. The sequence is that of UPF0391 membrane protein SG0393 from Sodalis glossinidius (strain morsitans).